Reading from the N-terminus, the 452-residue chain is tRNA modification GTPase MnmE (452 aa).

(6S)-5-formyl-5,6,7,8-tetrahydrofolate contacts are provided by Arg21, Glu78, and Lys118. The region spanning 214-375 is the TrmE-type G domain; the sequence is GMKVVIAGRP…LREHLKQSMG (162 aa). Position 224 (Asn224) interacts with K(+). Residues 224-229, 243-249, 268-271, and 333-336 each bind GTP; these read NAGKSS, TDIAGTT, DTAG, and NKAD. Ser228 provides a ligand contact to Mg(2+). Residues Thr243, Ile245, and Thr248 each coordinate K(+). Thr249 contributes to the Mg(2+) binding site. Lys452 provides a ligand contact to (6S)-5-formyl-5,6,7,8-tetrahydrofolate.

The protein belongs to the TRAFAC class TrmE-Era-EngA-EngB-Septin-like GTPase superfamily. TrmE GTPase family. In terms of assembly, homodimer. Heterotetramer of two MnmE and two MnmG subunits. Requires K(+) as cofactor.

It localises to the cytoplasm. In terms of biological role, exhibits a very high intrinsic GTPase hydrolysis rate. Involved in the addition of a carboxymethylaminomethyl (cmnm) group at the wobble position (U34) of certain tRNAs, forming tRNA-cmnm(5)s(2)U34. In Pasteurella multocida (strain Pm70), this protein is tRNA modification GTPase MnmE.